A 321-amino-acid chain; its full sequence is Ribose-phosphate pyrophosphokinase (321 aa).

Residues 39–41 (DGE) and 98–99 (RQ) contribute to the ATP site. Positions 132 and 170 each coordinate Mg(2+). Residue Lys195 is part of the active site. D-ribose 5-phosphate is bound by residues Arg197, Asp221, and 225–229 (DTGGT).

This sequence belongs to the ribose-phosphate pyrophosphokinase family. Class I subfamily. As to quaternary structure, homohexamer. The cofactor is Mg(2+).

It is found in the cytoplasm. It carries out the reaction D-ribose 5-phosphate + ATP = 5-phospho-alpha-D-ribose 1-diphosphate + AMP + H(+). The protein operates within metabolic intermediate biosynthesis; 5-phospho-alpha-D-ribose 1-diphosphate biosynthesis; 5-phospho-alpha-D-ribose 1-diphosphate from D-ribose 5-phosphate (route I): step 1/1. Functionally, involved in the biosynthesis of the central metabolite phospho-alpha-D-ribosyl-1-pyrophosphate (PRPP) via the transfer of pyrophosphoryl group from ATP to 1-hydroxyl of ribose-5-phosphate (Rib-5-P). The sequence is that of Ribose-phosphate pyrophosphokinase from Mycoplasmopsis pulmonis (strain UAB CTIP) (Mycoplasma pulmonis).